The chain runs to 308 residues: Atrochrysone carboxyl ACP thioesterase (308 aa).

The Zn(2+) site is built by histidine 99, histidine 101, aspartate 103, and histidine 104. Residue aspartate 103 is the Proton donor/acceptor of the active site.

It belongs to the metallo-beta-lactamase superfamily. Requires Zn(2+) as cofactor.

It catalyses the reaction atrochrysone carboxyl-[ACP] + H2O = atrochrysone carboxylate + holo-[ACP] + H(+). Its pathway is secondary metabolite biosynthesis. Functionally, atrochrysone carboxyl ACP thioesterase; part of the gene cluster that mediates the biosynthesis of physcion, a natural anthraquinone fungicide that can prevent plant fungal infections. The pathway begins with the polyketide synthase AcPKS that condenses 8 malonyl-CoA units to synthesize atrochrysone thioester which is released from the synthase by the atrochrysone carboxyl ACP thioesterase AcTE that breaks the thioester bond and leads to free atrochrysone carboxylic acid. Spontaneous decarboxylation of atrochrysone carboxylic acid leads to the formation of atrochrysone. Then, atrochrysone undergoes spontaneous dehydration and oxidation, giving the products emodin anthrone and emodin. The O-methyltransferase AcOMT then methylates the C-6 hydroxyl of emodin to form physcion. This Aspergillus chevalieri (Eurotium chevalieri) protein is Atrochrysone carboxyl ACP thioesterase.